Consider the following 93-residue polypeptide: Putative pterin-4-alpha-carbinolamine dehydratase (93 aa).

The protein belongs to the pterin-4-alpha-carbinolamine dehydratase family.

It catalyses the reaction (4aS,6R)-4a-hydroxy-L-erythro-5,6,7,8-tetrahydrobiopterin = (6R)-L-erythro-6,7-dihydrobiopterin + H2O. This is Putative pterin-4-alpha-carbinolamine dehydratase from Thermomicrobium roseum (strain ATCC 27502 / DSM 5159 / P-2).